The following is a 78-amino-acid chain: Large ribosomal subunit protein bL28 (78 aa).

The segment at methionine 1–alanine 21 is disordered.

Belongs to the bacterial ribosomal protein bL28 family.

The chain is Large ribosomal subunit protein bL28 from Shewanella piezotolerans (strain WP3 / JCM 13877).